Here is a 298-residue protein sequence, read N- to C-terminus: GTPase Era (298 aa).

In terms of domain architecture, Era-type G spans K4 to E171. Residues G12–S19 are G1. G12 to S19 contacts GTP. The interval Q38 to N42 is G2. A G3 region spans residues D59–G62. GTP-binding positions include D59–I63 and N121–D124. The tract at residues N121–D124 is G4. The G5 stretch occupies residues I150 to A152. Positions L202–P279 constitute a KH type-2 domain.

Belongs to the TRAFAC class TrmE-Era-EngA-EngB-Septin-like GTPase superfamily. Era GTPase family. In terms of assembly, monomer.

It is found in the cytoplasm. It localises to the cell membrane. Functionally, an essential GTPase that binds both GDP and GTP, with rapid nucleotide exchange. Plays a role in 16S rRNA processing and 30S ribosomal subunit biogenesis and possibly also in cell cycle regulation and energy metabolism. The chain is GTPase Era from Ruminiclostridium cellulolyticum (strain ATCC 35319 / DSM 5812 / JCM 6584 / H10) (Clostridium cellulolyticum).